A 196-amino-acid polypeptide reads, in one-letter code: ATP-dependent Clp protease proteolytic subunit (196 aa).

Catalysis depends on serine 96, which acts as the Nucleophile. Histidine 121 is an active-site residue.

Belongs to the peptidase S14 family. In terms of assembly, fourteen ClpP subunits assemble into 2 heptameric rings which stack back to back to give a disk-like structure with a central cavity, resembling the structure of eukaryotic proteasomes.

The protein resides in the cytoplasm. It catalyses the reaction Hydrolysis of proteins to small peptides in the presence of ATP and magnesium. alpha-casein is the usual test substrate. In the absence of ATP, only oligopeptides shorter than five residues are hydrolyzed (such as succinyl-Leu-Tyr-|-NHMec, and Leu-Tyr-Leu-|-Tyr-Trp, in which cleavage of the -Tyr-|-Leu- and -Tyr-|-Trp bonds also occurs).. In terms of biological role, cleaves peptides in various proteins in a process that requires ATP hydrolysis. Has a chymotrypsin-like activity. Plays a major role in the degradation of misfolded proteins. This chain is ATP-dependent Clp protease proteolytic subunit, found in Streptococcus equi subsp. zooepidemicus (strain H70).